We begin with the raw amino-acid sequence, 537 residues long: Chaperonin GroEL (537 aa).

Residues 30–33 (TLGP), 87–91 (DGTTT), glycine 414, 477–479 (DAV), and aspartate 493 each bind ATP.

This sequence belongs to the chaperonin (HSP60) family. In terms of assembly, forms a cylinder of 14 subunits composed of two heptameric rings stacked back-to-back. Interacts with the co-chaperonin GroES.

The protein localises to the cytoplasm. It carries out the reaction ATP + H2O + a folded polypeptide = ADP + phosphate + an unfolded polypeptide.. Together with its co-chaperonin GroES, plays an essential role in assisting protein folding. The GroEL-GroES system forms a nano-cage that allows encapsulation of the non-native substrate proteins and provides a physical environment optimized to promote and accelerate protein folding. This Coprothermobacter proteolyticus (strain ATCC 35245 / DSM 5265 / OCM 4 / BT) protein is Chaperonin GroEL.